The following is a 169-amino-acid chain: GSK-3-binding protein (169 aa).

The interval 75–100 (TPRGAARHAQHHHHHSPRQQGTGGNK) is disordered. Residues 79 to 91 (AARHAQHHHHHSP) show a composition bias toward basic residues. Positions 122 to 145 (DDPHELLQELLLSGNLIKEAVRRL) are involved in GSK-3 binding. The tract at residues 147-169 (MAGESPDPPGSRRVSECTETTVQ) is disordered.

This sequence belongs to the GSK-3-binding protein family.

In terms of biological role, binds GSK-3 and prevents GSK-3-dependent phosphorylation. Regulates the stability of beta-catenin in embryos. Maternal GBP is required for dorsal-ventral axis formation. The sequence is that of GSK-3-binding protein (gbp) from Xenopus laevis (African clawed frog).